A 223-amino-acid polypeptide reads, in one-letter code: Probable transaldolase (223 aa).

Catalysis depends on Lys-92, which acts as the Schiff-base intermediate with substrate.

The protein belongs to the transaldolase family. Type 3B subfamily.

The protein resides in the cytoplasm. The enzyme catalyses D-sedoheptulose 7-phosphate + D-glyceraldehyde 3-phosphate = D-erythrose 4-phosphate + beta-D-fructose 6-phosphate. Its pathway is carbohydrate degradation; pentose phosphate pathway; D-glyceraldehyde 3-phosphate and beta-D-fructose 6-phosphate from D-ribose 5-phosphate and D-xylulose 5-phosphate (non-oxidative stage): step 2/3. Functionally, transaldolase is important for the balance of metabolites in the pentose-phosphate pathway. The sequence is that of Probable transaldolase from Thermus thermophilus (strain ATCC 27634 / DSM 579 / HB8).